The chain runs to 110 residues: Putative membrane protein insertion efficiency factor (110 aa).

The protein belongs to the UPF0161 family.

The protein resides in the cell inner membrane. Could be involved in insertion of integral membrane proteins into the membrane. This Campylobacter hominis (strain ATCC BAA-381 / DSM 21671 / CCUG 45161 / LMG 19568 / NCTC 13146 / CH001A) protein is Putative membrane protein insertion efficiency factor.